The following is a 534-amino-acid chain: Cytochrome c oxidase subunit 1 (534 aa).

Residues 16–36 (VLYFIFAIFCGMAGTAMSLII) form a helical membrane-spanning segment. Residues Glu-39, Ala-42, and Gly-44 each contribute to the Ca(2+) site. 6 helical membrane-spanning segments follow: residues 57–77 (VLVV…ALIG), 101–121 (ISFW…LVES), 147–167 (AIFA…NFIV), 182–202 (LPLF…SLPV), 235–255 (LFWF…FGII), and 267–287 (VFGE…GFLV). His-62 is a binding site for Fe(II)-heme a. Cu cation is bound at residue His-241. Positions 241–245 (HPEVY) form a cross-link, 1'-histidyl-3'-tyrosine (His-Tyr). Residue Tyr-245 coordinates O2. Residues His-290 and His-291 each contribute to the Cu cation site. Helical transmembrane passes span 310-330 (MIIA…IYGG) and 338-358 (MLYA…GVAL). Residues His-368 and Asp-369 each coordinate Mg(2+). The next 2 helical transmembrane spans lie at 372 to 392 (YVVG…LFAG) and 412 to 432 (IQFW…HFLG). His-376 is a binding site for heme a3. His-378 contributes to the Fe(II)-heme a binding site. Pro-441 serves as a coordination point for Ca(2+). A helical membrane pass occupies residues 452-472 (YVASIGSIIAVFSLFLFIYIL).

Belongs to the heme-copper respiratory oxidase family. Component of the cytochrome c oxidase (complex IV, CIV), a multisubunit enzyme composed of a catalytic core of 3 subunits and several supernumerary subunits. The complex exists as a monomer or a dimer and forms supercomplexes (SCs) in the inner mitochondrial membrane with ubiquinol-cytochrome c oxidoreductase (cytochrome b-c1 complex, complex III, CIII). Heme is required as a cofactor. The cofactor is Cu cation.

The protein resides in the mitochondrion inner membrane. It carries out the reaction 4 Fe(II)-[cytochrome c] + O2 + 8 H(+)(in) = 4 Fe(III)-[cytochrome c] + 2 H2O + 4 H(+)(out). The protein operates within energy metabolism; oxidative phosphorylation. Its function is as follows. Component of the cytochrome c oxidase, the last enzyme in the mitochondrial electron transport chain which drives oxidative phosphorylation. The respiratory chain contains 3 multisubunit complexes succinate dehydrogenase (complex II, CII), ubiquinol-cytochrome c oxidoreductase (cytochrome b-c1 complex, complex III, CIII) and cytochrome c oxidase (complex IV, CIV), that cooperate to transfer electrons derived from NADH and succinate to molecular oxygen, creating an electrochemical gradient over the inner membrane that drives transmembrane transport and the ATP synthase. Cytochrome c oxidase is the component of the respiratory chain that catalyzes the reduction of oxygen to water. Electrons originating from reduced cytochrome c in the intermembrane space (IMS) are transferred via the dinuclear copper A center (CU(A)) of subunit 2 and heme A of subunit 1 to the active site in subunit 1, a binuclear center (BNC) formed by heme A3 and copper B (CU(B)). The BNC reduces molecular oxygen to 2 water molecules using 4 electrons from cytochrome c in the IMS and 4 protons from the mitochondrial matrix. The polypeptide is Cytochrome c oxidase subunit 1 (COX1) (Kluyveromyces lactis (strain ATCC 8585 / CBS 2359 / DSM 70799 / NBRC 1267 / NRRL Y-1140 / WM37) (Yeast)).